We begin with the raw amino-acid sequence, 143 residues long: UPF0260 protein plu2141 (143 aa).

Belongs to the UPF0260 family.

The chain is UPF0260 protein plu2141 from Photorhabdus laumondii subsp. laumondii (strain DSM 15139 / CIP 105565 / TT01) (Photorhabdus luminescens subsp. laumondii).